A 355-amino-acid polypeptide reads, in one-letter code: Elongation factor Ts (355 aa).

Positions 82 to 85 (TDFV) are involved in Mg(2+) ion dislocation from EF-Tu.

Belongs to the EF-Ts family.

The protein localises to the cytoplasm. In terms of biological role, associates with the EF-Tu.GDP complex and induces the exchange of GDP to GTP. It remains bound to the aminoacyl-tRNA.EF-Tu.GTP complex up to the GTP hydrolysis stage on the ribosome. This Helicobacter acinonychis (strain Sheeba) protein is Elongation factor Ts.